A 708-amino-acid chain; its full sequence is MESNQSNNGGSGNAALNRGGRYVPPHLRGGDGGAAAAASAGGDDRRGGAGGGGYRRGGGNSGGGGGGGYDRGYNDNRDDRDNRGGSGGYGRDRNYEDRGYNGGGGGGGNRGYNNNRGGGGGGYNRQDRGDGGSSNFSRGGYNNRDEGSDNRGSGRSYNNDRRDNGGDGQNTRWNNLDAPPSRGTSKWENRGARDERIEQELFSGQLSGINFDKYEEIPVEATGDDVPQPISLFSDLSLHEWIEENIKTAGYDRPTPVQKYSIPALQGGRDLMSCAQTGSGKTAAFLVPLVNAILQDGPDAVHRSVTSSGGRKKQYPSALVLSPTRELSLQIFNESRKFAYRTPITSALLYGGRENYKDQIHKLRLGCHILIATPGRLIDVMDQGLIGMEGCRYLVLDEADRMLDMGFEPQIRQIVECNRMPSKEERITAMFSATFPKEIQLLAQDFLKENYVFLAVGRVGSTSENIMQKIVWVEEDEKRSYLMDLLDATGDSSLTLVFVETKRGASDLAYYLNRQNYEVVTIHGDLKQFEREKHLDLFRTGTAPILVATAVAARGLDIPNVKHVINYDLPSDVDEYVHRIGRTGRVGNVGLATSFFNDKNRNIARELMDLIVEANQELPDWLEGMSGDMRSGGGYRGRGGRGNGQRFGGRDHRYQGGSGNGGGGNGGGGGFGGGGQRSGGGGGFQSGGGGGRQQQQQQRAQPQQDWWS.

Residues 1–21 (MESNQSNNGGSGNAALNRGGR) show a composition bias toward low complexity. The interval 1 to 191 (MESNQSNNGG…RGTSKWENRG (191 aa)) is disordered. Over residues 48–70 (GAGGGGYRRGGGNSGGGGGGGYD) the composition is skewed to gly residues. Composition is skewed to basic and acidic residues over residues 72–83 (GYNDNRDDRDNR) and 90–99 (GRDRNYEDRG). Gly residues predominate over residues 100-123 (YNGGGGGGGNRGYNNNRGGGGGGY). A Q motif motif is present at residues 231–259 (SLFSDLSLHEWIEENIKTAGYDRPTPVQK). The region spanning 262 to 453 (IPALQGGRDL…QDFLKENYVF (192 aa)) is the Helicase ATP-binding domain. 275–282 (AQTGSGKT) serves as a coordination point for ATP. The short motif at 397–400 (DEAD) is the DEAD box element. Residues 465 to 626 (NIMQKIVWVE…ELPDWLEGMS (162 aa)) form the Helicase C-terminal domain. Residues 623–708 (EGMSGDMRSG…RAQPQQDWWS (86 aa)) form a disordered region. 2 stretches are compositionally biased toward gly residues: residues 630–647 (RSGG…GQRF) and 656–692 (GGSG…GGGR). The span at 699–708 (RAQPQQDWWS) shows a compositional bias: polar residues.

It belongs to the DEAD box helicase family. DDX3/DED1 subfamily. Binds RNA as a monomer at low laf-1 concentrations and as a dimer at high laf-1 concentrations. In terms of tissue distribution, expressed in the germline and soma of young adult hermaphrodites.

It is found in the cytoplasm. The protein resides in the cytoplasmic granule. The protein localises to the nucleus. Its subcellular location is the stress granule. It localises to the inflammasome. It is found in the cell membrane. The protein resides in the cell projection. The protein localises to the lamellipodium. It carries out the reaction ATP + H2O = ADP + phosphate + H(+). Its function is as follows. Multifunctional ATP-dependent RNA helicase. Plays a role in RNA remodeling, but is not required for RNA unwinding. Binds to RNA in a concentration-dependent manner to stimulate annealing between two complementary strands of RNA. This process is also dependent upon ATP; ATP reduces binding to RNA and subsequently diminishes RNA annealing. Involved in many cellular processes, which do not necessarily require its ATPase/helicase catalytic activities. Involved in the regulation of transcription and translation initiation. Involved in innate immunity. Involved in both stress and inflammatory responses. Promotes liquid-liquid phase separation of P granules, which is a process important for intracellular organization and stress granule assembly. Required for embryonic development. Plays a role in sexual cell fate determination by negatively regulating the translation of the sex determining protein tra-2. May play a protective role in the response to heat and oxidative stress. May negatively regulate extrinsic apoptotic signaling pathway via death domain receptors. May be involved in mitotic chromosome segregation. This Caenorhabditis elegans protein is ATP-dependent RNA helicase laf-1.